The sequence spans 416 residues: Gamma-glutamyl phosphate reductase (416 aa).

Belongs to the gamma-glutamyl phosphate reductase family.

The protein localises to the cytoplasm. The catalysed reaction is L-glutamate 5-semialdehyde + phosphate + NADP(+) = L-glutamyl 5-phosphate + NADPH + H(+). Its pathway is amino-acid biosynthesis; L-proline biosynthesis; L-glutamate 5-semialdehyde from L-glutamate: step 2/2. Functionally, catalyzes the NADPH-dependent reduction of L-glutamate 5-phosphate into L-glutamate 5-semialdehyde and phosphate. The product spontaneously undergoes cyclization to form 1-pyrroline-5-carboxylate. The polypeptide is Gamma-glutamyl phosphate reductase (Streptococcus equi subsp. zooepidemicus (strain MGCS10565)).